The chain runs to 156 residues: Small ribosomal subunit protein uS7 (156 aa).

This sequence belongs to the universal ribosomal protein uS7 family. As to quaternary structure, part of the 30S ribosomal subunit. Contacts proteins S9 and S11.

One of the primary rRNA binding proteins, it binds directly to 16S rRNA where it nucleates assembly of the head domain of the 30S subunit. Is located at the subunit interface close to the decoding center, probably blocks exit of the E-site tRNA. This is Small ribosomal subunit protein uS7 from Mannheimia succiniciproducens (strain KCTC 0769BP / MBEL55E).